The sequence spans 102 residues: uncharacterized protein (102 aa).

The next 3 membrane-spanning stretches (helical) occupy residues 14 to 34 (IKNW…VISA), 35 to 55 (VAFT…LILI), and 76 to 96 (ILSI…HCYI).

Its subcellular location is the cell membrane. This is an uncharacterized protein from Methanocaldococcus jannaschii (strain ATCC 43067 / DSM 2661 / JAL-1 / JCM 10045 / NBRC 100440) (Methanococcus jannaschii).